Here is a 321-residue protein sequence, read N- to C-terminus: uncharacterized protein (321 aa).

Residues 130-314 form the Exonuclease domain; it reads NLVYDLETTG…NDVDALIKIM (185 aa).

This is an uncharacterized protein from Acanthamoeba polyphaga (Amoeba).